The following is a 691-amino-acid chain: ATP-dependent zinc metalloprotease FtsH 2 (691 aa).

The disordered stretch occupies residues 1-48 (MTDEPQSDEQQTTEQERPLGTKRATRADGLRRPGVRSGLAERRSPAAD). The Cytoplasmic portion of the chain corresponds to 1–64 (MTDEPQSDEQ…AAVRRFLLRD (64 aa)). Basic and acidic residues predominate over residues 14–31 (EQERPLGTKRATRADGLR). The helical transmembrane segment at 65 to 85 (VFALGLMIAALVIVILFFTLL) threads the bilayer. Over 86-168 (GATKPTSSGT…AVKQQPGKAQ (83 aa)) the chain is Extracellular. Residues 169 to 189 (VTIVVQFLLPILLLVCLFALF) traverse the membrane as a helical segment. At 190–691 (MRIGQDGGAG…ERGSARDRDA (502 aa)) the chain is on the cytoplasmic side. Residue 265–272 (GPPGTGKT) coordinates ATP. Histidine 486 provides a ligand contact to Zn(2+). The active site involves glutamate 487. Residues histidine 490 and aspartate 563 each contribute to the Zn(2+) site.

The protein in the central section; belongs to the AAA ATPase family. This sequence in the C-terminal section; belongs to the peptidase M41 family. As to quaternary structure, homohexamer. Requires Zn(2+) as cofactor.

Its subcellular location is the cell membrane. Its function is as follows. Acts as a processive, ATP-dependent zinc metallopeptidase for both cytoplasmic and membrane proteins. Plays a role in the quality control of integral membrane proteins. This Conexibacter woesei (strain DSM 14684 / CCUG 47730 / CIP 108061 / JCM 11494 / NBRC 100937 / ID131577) protein is ATP-dependent zinc metalloprotease FtsH 2.